Consider the following 322-residue polypeptide: Probable ethanolamine-phosphate cytidylyltransferase (322 aa).

The protein belongs to the cytidylyltransferase family.

The enzyme catalyses phosphoethanolamine + CTP + H(+) = CDP-ethanolamine + diphosphate. The protein operates within phospholipid metabolism; phosphatidylethanolamine biosynthesis; phosphatidylethanolamine from ethanolamine: step 2/3. This Encephalitozoon cuniculi (strain GB-M1) (Microsporidian parasite) protein is Probable ethanolamine-phosphate cytidylyltransferase (MUQ1).